The chain runs to 1205 residues: Nitric oxide synthase 3 (1205 aa).

A disordered region spans residues 1–73; that stretch reads MGNLKSVGQE…PPEGPKFPRV (73 aa). G2 carries N-myristoyl glycine lipidation. S-palmitoyl cysteine attachment occurs at residues C15 and C26. A compositionally biased stretch (gly residues) spans 15–27; it reads CGLGLGLGLGLCG. A compositionally biased stretch (pro residues) spans 33–47; the sequence is SPAPEPSRAPAPATP. C96 and C101 together coordinate Zn(2+). Residues 100 to 488 are interaction with NOSIP; the sequence is CCLGSLVLPR…PDPWKGSATK (389 aa). S104 provides a ligand contact to (6R)-L-erythro-5,6,7,8-tetrahydrobiopterin. Position 116 is a phosphoserine; by CDK5 (S116). C186 is a binding site for heme b. L-arginine contacts are provided by Q249, W358, Y359, E363, and N368. 3 residues coordinate (6R)-L-erythro-5,6,7,8-tetrahydrobiopterin: A448, W449, and F462. Heme b is bound at residue Y477. Positions 492 to 512 are calmodulin-binding; sequence ITRKKTFKEVANAVKISASLM. T497 carries the post-translational modification Phosphothreonine; by AMPK and PKA. The Flavodoxin-like domain maps to 522 to 705; sequence ATILYASETG…AFRGWAKAAF (184 aa). FMN-binding residues include S528, E529, T530, R532, S574, and T575. Phosphoserine is present on residues S617, S635, and S640. FMN is bound by residues S656, C663, E689, and Q693. Residues 758–1004 form the FAD-binding FR-type domain; that stretch reads RKMFQATVLS…IRGAPSFRLP (247 aa). An NADP(+)-binding site is contributed by R778. An FAD-binding site is contributed by H800. The interval 820 to 847 is disordered; sequence EDPPPPTESVAVEQLEKGSPGGPPPSWV. Residue S838 is modified to Phosphoserine. FAD is bound by residues R940, Y942, S943, T958, A960, Y964, V977, C978, and S979. NADP(+) is bound by residues T1018, R1051, S1080, R1081, K1087, Y1089, and Q1091. At T1177 the chain carries Phosphothreonine. S1179 is subject to Phosphoserine; by AMPK, PDPK1 and PKA. The residue at position 1181 (S1181) is a Phosphoserine.

Belongs to the NOS family. In terms of assembly, homodimer. Interacts with NOSIP and NOSTRIN. Interacts with HSP90AB1. Forms a complex with ASL, ASS1 and SLC7A1; the complex regulates cell-autonomous L-arginine synthesis and citrulline recycling while channeling extracellular L-arginine to nitric oxide synthesis pathway. Heme b is required as a cofactor. FAD serves as cofactor. Requires FMN as cofactor. The cofactor is (6R)-L-erythro-5,6,7,8-tetrahydrobiopterin. Phosphorylation by AMPK at Ser-1179 in the presence of Ca(2+)-calmodulin (CaM) activates activity. In absence of Ca(2+)-calmodulin, AMPK also phosphorylates Thr-497, resulting in inhibition of activity. Phosphorylation of Ser-116 by CDK5 reduces activity.

It is found in the cell membrane. It localises to the membrane. The protein localises to the caveola. The protein resides in the cytoplasm. Its subcellular location is the cytoskeleton. It is found in the golgi apparatus. The catalysed reaction is 2 L-arginine + 3 NADPH + 4 O2 + H(+) = 2 L-citrulline + 2 nitric oxide + 3 NADP(+) + 4 H2O. Stimulated by calcium/calmodulin. Inhibited by NOSIP and NOSTRIN. Functionally, produces nitric oxide (NO) which is implicated in vascular smooth muscle relaxation through a cGMP-mediated signal transduction pathway. NO mediates vascular endothelial growth factor (VEGF)-induced angiogenesis in coronary vessels and promotes blood clotting through the activation of platelets. In Bos taurus (Bovine), this protein is Nitric oxide synthase 3 (NOS3).